A 56-amino-acid chain; its full sequence is Large ribosomal subunit protein bL32 (56 aa).

The tract at residues Met-1–His-37 is disordered. Residues Lys-7–Arg-16 are compositionally biased toward basic residues. Polar residues predominate over residues Ala-21 to Ala-31.

It belongs to the bacterial ribosomal protein bL32 family.

The chain is Large ribosomal subunit protein bL32 from Shewanella pealeana (strain ATCC 700345 / ANG-SQ1).